We begin with the raw amino-acid sequence, 66 residues long: UPF0337 protein SAG0606 (66 aa).

Basic and acidic residues predominate over residues 1-10; sequence MSQEKLKSKV. The tract at residues 1-23 is disordered; sequence MSQEKLKSKVEQASGSLKEGAGK.

Belongs to the UPF0337 (CsbD) family.

This chain is UPF0337 protein SAG0606, found in Streptococcus agalactiae serotype V (strain ATCC BAA-611 / 2603 V/R).